A 444-amino-acid polypeptide reads, in one-letter code: Methylenetetrahydrofolate--tRNA-(uracil-5-)-methyltransferase TrmFO (444 aa).

10 to 15 serves as a coordination point for FAD; the sequence is GAGLAG.

It belongs to the MnmG family. TrmFO subfamily. The cofactor is FAD.

It is found in the cytoplasm. The catalysed reaction is uridine(54) in tRNA + (6R)-5,10-methylene-5,6,7,8-tetrahydrofolate + NADH + H(+) = 5-methyluridine(54) in tRNA + (6S)-5,6,7,8-tetrahydrofolate + NAD(+). It catalyses the reaction uridine(54) in tRNA + (6R)-5,10-methylene-5,6,7,8-tetrahydrofolate + NADPH + H(+) = 5-methyluridine(54) in tRNA + (6S)-5,6,7,8-tetrahydrofolate + NADP(+). Functionally, catalyzes the folate-dependent formation of 5-methyl-uridine at position 54 (M-5-U54) in all tRNAs. The protein is Methylenetetrahydrofolate--tRNA-(uracil-5-)-methyltransferase TrmFO of Streptococcus gordonii (strain Challis / ATCC 35105 / BCRC 15272 / CH1 / DL1 / V288).